A 406-amino-acid chain; its full sequence is Peptide chain release factor PrfB3, chloroplastic (406 aa).

Belongs to the prokaryotic/mitochondrial release factor family. As to quaternary structure, interacts with PDE338.

The protein localises to the plastid. It localises to the chloroplast stroma. The protein resides in the chloroplast. Functionally, involved in the light- and stress-dependent regulation of stability of 3' processed petB transcripts, thus regulating cytochrome b6 accumulation, a rate-limiting step in photosynthetic electron transport. May be recruited to specifically protect petB transcripts against 3'-5' exonucleolytic attack by masking the 3' ends. Does not function as release factor. This chain is Peptide chain release factor PrfB3, chloroplastic, found in Arabidopsis thaliana (Mouse-ear cress).